We begin with the raw amino-acid sequence, 94 residues long: Large ribosomal subunit protein bL25 (94 aa).

The protein belongs to the bacterial ribosomal protein bL25 family. In terms of assembly, part of the 50S ribosomal subunit; part of the 5S rRNA/L5/L18/L25 subcomplex. Contacts the 5S rRNA. Binds to the 5S rRNA independently of L5 and L18.

This is one of the proteins that binds to the 5S RNA in the ribosome where it forms part of the central protuberance. The polypeptide is Large ribosomal subunit protein bL25 (Sodalis glossinidius (strain morsitans)).